The sequence spans 138 residues: Acidic phospholipase A2 PePLA2 (138 aa).

The first 16 residues, 1-16 (MRTLWIMAVLLLGVEG), serve as a signal peptide directing secretion. 7 disulfide bridges follow: C42/C131, C44/C60, C59/C110, C65/C138, C66/C103, C73/C97, and C91/C101. Residues Y43, G45, and G47 each coordinate Ca(2+). H63 is a catalytic residue. Position 64 (D64) interacts with Ca(2+). The active site involves D104.

Belongs to the phospholipase A2 family. Group II subfamily. D49 sub-subfamily. Requires Ca(2+) as cofactor. Expressed by the venom gland.

It localises to the secreted. The catalysed reaction is a 1,2-diacyl-sn-glycero-3-phosphocholine + H2O = a 1-acyl-sn-glycero-3-phosphocholine + a fatty acid + H(+). In terms of biological role, PLA2 catalyzes the calcium-dependent hydrolysis of the 2-acyl groups in 3-sn-phosphoglycerides. In Protobothrops elegans (Elegant pitviper), this protein is Acidic phospholipase A2 PePLA2.